The primary structure comprises 118 residues: Basic phospholipase A2 PA-5 (118 aa).

7 cysteine pairs are disulfide-bonded: C11–C71, C27–C117, C29–C45, C44–C98, C51–C91, C60–C84, and C78–C89. The Ca(2+) site is built by Y28, G30, and G32. Residue H48 is part of the active site. Residue D49 participates in Ca(2+) binding. Residue D92 is part of the active site.

It belongs to the phospholipase A2 family. Group I subfamily. D49 sub-subfamily. Requires Ca(2+) as cofactor. In terms of tissue distribution, expressed by the venom gland.

It is found in the secreted. It catalyses the reaction a 1,2-diacyl-sn-glycero-3-phosphocholine + H2O = a 1-acyl-sn-glycero-3-phosphocholine + a fatty acid + H(+). Functionally, PLA2 catalyzes the calcium-dependent hydrolysis of the 2-acyl groups in 3-sn-phosphoglycerides. This Pseudechis australis (Mulga snake) protein is Basic phospholipase A2 PA-5.